Consider the following 327-residue polypeptide: tRNA N6-adenosine threonylcarbamoyltransferase (327 aa).

Histidine 107 and histidine 111 together coordinate Fe cation. Substrate-binding positions include 129–133 (LVSGG), aspartate 162, glycine 175, and asparagine 263. Position 291 (aspartate 291) interacts with Fe cation.

The protein belongs to the KAE1 / TsaD family. Fe(2+) is required as a cofactor.

It is found in the cytoplasm. It carries out the reaction L-threonylcarbamoyladenylate + adenosine(37) in tRNA = N(6)-L-threonylcarbamoyladenosine(37) in tRNA + AMP + H(+). Its function is as follows. Required for the formation of a threonylcarbamoyl group on adenosine at position 37 (t(6)A37) in tRNAs that read codons beginning with adenine. Is involved in the transfer of the threonylcarbamoyl moiety of threonylcarbamoyl-AMP (TC-AMP) to the N6 group of A37, together with TsaE and TsaB. TsaD likely plays a direct catalytic role in this reaction. The chain is tRNA N6-adenosine threonylcarbamoyltransferase from Nautilia profundicola (strain ATCC BAA-1463 / DSM 18972 / AmH).